An 858-amino-acid chain; its full sequence is Bifunctional uridylyltransferase/uridylyl-removing enzyme (858 aa).

Residues 1-324 are uridylyltransferase; it reads MSAHAAPSPE…PATSGITRVL (324 aa). Residues 325-681 form a uridylyl-removing region; sequence SADRFVEKQG…ARPSPIGDAL (357 aa). An HD domain is found at 443–565; that stretch reads VDQHILMVLR…VGNERYLTAL (123 aa). ACT domains lie at 682 to 763 and 790 to 858; these read QVLV…PSKG and ILSV…AIAV.

Belongs to the GlnD family. It depends on Mg(2+) as a cofactor.

The enzyme catalyses [protein-PII]-L-tyrosine + UTP = [protein-PII]-uridylyl-L-tyrosine + diphosphate. It catalyses the reaction [protein-PII]-uridylyl-L-tyrosine + H2O = [protein-PII]-L-tyrosine + UMP + H(+). With respect to regulation, uridylyltransferase (UTase) activity is inhibited by glutamine, while glutamine activates uridylyl-removing (UR) activity. Modifies, by uridylylation and deuridylylation, the PII regulatory proteins (GlnB and homologs), in response to the nitrogen status of the cell that GlnD senses through the glutamine level. Under low glutamine levels, catalyzes the conversion of the PII proteins and UTP to PII-UMP and PPi, while under higher glutamine levels, GlnD hydrolyzes PII-UMP to PII and UMP (deuridylylation). Thus, controls uridylylation state and activity of the PII proteins, and plays an important role in the regulation of nitrogen assimilation and metabolism. In Burkholderia orbicola (strain MC0-3), this protein is Bifunctional uridylyltransferase/uridylyl-removing enzyme.